A 701-amino-acid chain; its full sequence is Elongation factor G (701 aa).

The 277-residue stretch at threonine 11 to leucine 287 folds into the tr-type G domain. GTP-binding positions include alanine 20–threonine 27, aspartate 84–histidine 88, and asparagine 138–aspartate 141.

The protein belongs to the TRAFAC class translation factor GTPase superfamily. Classic translation factor GTPase family. EF-G/EF-2 subfamily.

The protein localises to the cytoplasm. In terms of biological role, catalyzes the GTP-dependent ribosomal translocation step during translation elongation. During this step, the ribosome changes from the pre-translocational (PRE) to the post-translocational (POST) state as the newly formed A-site-bound peptidyl-tRNA and P-site-bound deacylated tRNA move to the P and E sites, respectively. Catalyzes the coordinated movement of the two tRNA molecules, the mRNA and conformational changes in the ribosome. The sequence is that of Elongation factor G from Mycobacterium marinum (strain ATCC BAA-535 / M).